A 380-amino-acid polypeptide reads, in one-letter code: Cytochrome b (380 aa).

Helical transmembrane passes span 34-54, 78-99, 114-134, and 179-199; these read FGSL…LLAM, WLIR…YFHI, WNTG…GYVL, and FFAL…IHLT. 2 residues coordinate heme b: His84 and His98. Heme b contacts are provided by His183 and His197. Residue His202 participates in a ubiquinone binding. The next 4 helical transmembrane spans lie at 227-247, 289-309, 321-341, and 348-368; these read LKDI…ALFS, LGGV…PFLH, LSQL…WVGS, and FIII…VLFP.

This sequence belongs to the cytochrome b family. As to quaternary structure, the cytochrome bc1 complex contains 11 subunits: 3 respiratory subunits (MT-CYB, CYC1 and UQCRFS1), 2 core proteins (UQCRC1 and UQCRC2) and 6 low-molecular weight proteins (UQCRH/QCR6, UQCRB/QCR7, UQCRQ/QCR8, UQCR10/QCR9, UQCR11/QCR10 and a cleavage product of UQCRFS1). This cytochrome bc1 complex then forms a dimer. Heme b serves as cofactor.

It localises to the mitochondrion inner membrane. Component of the ubiquinol-cytochrome c reductase complex (complex III or cytochrome b-c1 complex) that is part of the mitochondrial respiratory chain. The b-c1 complex mediates electron transfer from ubiquinol to cytochrome c. Contributes to the generation of a proton gradient across the mitochondrial membrane that is then used for ATP synthesis. The chain is Cytochrome b (MT-CYB) from Halobaena caerulea (Blue petrel).